The primary structure comprises 478 residues: Lactate utilization protein B (478 aa).

2 consecutive 4Fe-4S ferredoxin-type domains span residues 303–333 (GTEF…GHAY) and 352–381 (YDDH…LHEQ). Cys312, Cys315, Cys318, Cys322, Cys365, Cys368, and Cys372 together coordinate [4Fe-4S] cluster.

The protein belongs to the LutB/YkgF family.

Is involved in L-lactate degradation and allows cells to grow with lactate as the sole carbon source. Has probably a role as an electron transporter during oxidation of L-lactate. The chain is Lactate utilization protein B from Oceanobacillus iheyensis (strain DSM 14371 / CIP 107618 / JCM 11309 / KCTC 3954 / HTE831).